Reading from the N-terminus, the 108-residue chain is Transcription initiation factor IIA subunit 2 (108 aa).

This sequence belongs to the TFIIA subunit 2 family. As to quaternary structure, TFIIA is a heterodimer of the large unprocessed subunit 1 and a small subunit gamma. It was originally believed to be a heterotrimer of an alpha, a beta and a gamma subunit. Interacts with NCOA6 general coactivator. TFIIA forms a complex with TBP.

It localises to the nucleus. In terms of biological role, TFIIA is a component of the transcription machinery of RNA polymerase II and plays an important role in transcriptional activation. TFIIA in a complex with TBP mediates transcriptional activity. The chain is Transcription initiation factor IIA subunit 2 (gtf2a2) from Oncorhynchus mykiss (Rainbow trout).